The following is a 231-amino-acid chain: MKRAVVVFSGGQDSTTCLVQALQQYDEVHCVTFDYGQRHRAEIDVARELALKLGARAHKVLDVTLLNELAVSSLTRDSIPVPDYEPEADGIPNTFVPGRNILFLTLAAIYAYQVKAEAVITGVCETDFSGYPDCRDEFVKALNHAVSLGMAKHIRFETPLMWIDKAETWALADYYGKLDLVRNETLTCYNGIKGDGCGHCAACNLRANGLNHYLADKPTVMAAMKQKTGLK.

8–18 (FSGGQDSTTCL) contacts ATP. Cys188, Cys197, Cys200, and Cys203 together coordinate Zn(2+).

The protein belongs to the QueC family. The cofactor is Zn(2+).

It carries out the reaction 7-carboxy-7-deazaguanine + NH4(+) + ATP = 7-cyano-7-deazaguanine + ADP + phosphate + H2O + H(+). The protein operates within purine metabolism; 7-cyano-7-deazaguanine biosynthesis. Catalyzes the ATP-dependent conversion of 7-carboxy-7-deazaguanine (CDG) to 7-cyano-7-deazaguanine (preQ(0)). This Shigella dysenteriae serotype 1 (strain Sd197) protein is 7-cyano-7-deazaguanine synthase.